A 205-amino-acid chain; its full sequence is Small ribosomal subunit protein uS5 (205 aa).

The region spanning 49 to 112 is the S5 DRBM domain; that stretch reads LEDEVLDIAM…TKAKMNLVKV (64 aa).

It belongs to the universal ribosomal protein uS5 family. In terms of assembly, part of the 30S ribosomal subunit. Contacts protein S4.

Functionally, with S4 and S12 plays an important role in translational accuracy. This chain is Small ribosomal subunit protein uS5, found in Methanoregula boonei (strain DSM 21154 / JCM 14090 / 6A8).